The primary structure comprises 156 residues: Small ribosomal subunit protein uS7 (156 aa).

Belongs to the universal ribosomal protein uS7 family. As to quaternary structure, part of the 30S ribosomal subunit. Contacts proteins S9 and S11.

One of the primary rRNA binding proteins, it binds directly to 16S rRNA where it nucleates assembly of the head domain of the 30S subunit. Is located at the subunit interface close to the decoding center, probably blocks exit of the E-site tRNA. In Arthrobacter sp. (strain FB24), this protein is Small ribosomal subunit protein uS7.